The chain runs to 258 residues: UDP-2,3-diacylglucosamine hydrolase (258 aa).

5 residues coordinate Mn(2+): aspartate 15, histidine 17, aspartate 48, asparagine 88, and histidine 123. Asparagine 88 to arginine 89 serves as a coordination point for substrate. Residues aspartate 131, serine 169, asparagine 173, lysine 176, and histidine 204 each coordinate substrate. The Mn(2+) site is built by histidine 204 and histidine 206.

The protein belongs to the LpxH family. Mn(2+) is required as a cofactor.

Its subcellular location is the cell inner membrane. The enzyme catalyses UDP-2-N,3-O-bis[(3R)-3-hydroxytetradecanoyl]-alpha-D-glucosamine + H2O = 2-N,3-O-bis[(3R)-3-hydroxytetradecanoyl]-alpha-D-glucosaminyl 1-phosphate + UMP + 2 H(+). It functions in the pathway glycolipid biosynthesis; lipid IV(A) biosynthesis; lipid IV(A) from (3R)-3-hydroxytetradecanoyl-[acyl-carrier-protein] and UDP-N-acetyl-alpha-D-glucosamine: step 4/6. In terms of biological role, hydrolyzes the pyrophosphate bond of UDP-2,3-diacylglucosamine to yield 2,3-diacylglucosamine 1-phosphate (lipid X) and UMP by catalyzing the attack of water at the alpha-P atom. Involved in the biosynthesis of lipid A, a phosphorylated glycolipid that anchors the lipopolysaccharide to the outer membrane of the cell. The polypeptide is UDP-2,3-diacylglucosamine hydrolase (Bordetella pertussis (strain Tohama I / ATCC BAA-589 / NCTC 13251)).